The chain runs to 1259 residues: MGGGNLHSLPPENASVSASYAVTVGNTKLSDAPVLFFVYCHKAFRAQLVELRRFATDAAEADSFSGDLAVELSRKFEFLKLVYKYHSAAEDEVIFLALDKRVKNIVSNYSLEHAGTDDLFTSIFHWLHVLEEEIGSRSDVLREVILCIGTIQSSICQHMLKEERQVFPLLIEKFSFREQASLVWQFICSVPVMVLEDFLPWMISHLSHEEKIEVENCIKDVAPNEDSLQQVISSWLLDDSQSSCGTPTEIMKGVQYVNVSKSLKKSPESHPSSGCFQRFWEWSKKSLSIPNVGRSPIHGLRLFQNAIEKDLRDIQEGLCQAKFQTLILDLDVLMARLNFLADVLVSYSNAFKKFFHPVLEEMTARRSSTAKQFNIDDCLENFQRLLYKSADDKTKTDNFLLQLQEELESLIIQVTKQFAIQRTEVFPIISKNCNHEMQKQLLYTSIHVLPLGLLKCVILWFSAHLSEEESQSILHFLSLEDSSPKKSFPRLLLQWLRFGYSGKTSVERFWKQLDVMFKVRCSCQKEHTEEASGSFSNQTQLQLCKVSKDVYPRKKDKSSTCFMSMDLAVGDMYETPYSSRMNQQMTFSGKLKPPLHLPDFFGEKNMDDPMIMDVKPIDLLFFFHKAMKMDLDYLVCGSTRLAADFRFLAEFQQRFHMIKFLYQIHSDAEDEIAFPALEAKGQLKNISHSFSIDHELETKHFDKVSFILNEMSELNMLVSTINTTAADHDRKMKYERLCLSLREICKSMHKLLSEHIQHEETELWGLFRNCFSIEEQEKIIGCMLGRISGEILQDMIPWLMESLTSDEQLAAMSLWRQATRKTMFVEWLTEWYNGHVLQEEAGEANNDPFGDSDPLEIVWKYLFEASADGEKGSMRSSLLKLPKTNFTGIMNQPPPNYKVEVGKKEEKDLERSESKKICRGSNQEGDKEQTDKMSQKVSQFGPSKKYEQLLTMSEEELVVVIKKISCDSSLDPQKKDYIKQNLLMSRWNISQRTYNLEPSSLSSNMETVHGQHPSYRDPHSLIFGCNHYKRNCKLLAPCCDKLFTCIRCHDEEADHSVDRKQITKMMCMKCLLIQPIGANCSNTSCKSSMGKYFCKICKLYDDERKIYHCPYCNLCRVGKGLGIDYFHCMKCNACMSRTLVEHVCREKCLEDNCPICHEYIFTSSSPVKALPCGHLMHSTCFQEYTCSHYTCPVCSKSLGDMQVYFKMLDALLAEEKMPDEYSNKTQVILCNDCGRKGNAPYHWLYHKCTTCGSYNSRLL.

A helical membrane pass occupies residues 441-461; it reads LLYTSIHVLPLGLLKCVILWF. 2 stretches are compositionally biased toward basic and acidic residues: residues 904–916 and 924–934; these read KEEK…ESKK and EGDKEQTDKMS. The disordered stretch occupies residues 904–938; it reads KEEKDLERSESKKICRGSNQEGDKEQTDKMSQKVS. The CHY-type zinc finger occupies 1018 to 1087; the sequence is PHSLIFGCNH…ANCSNTSCKS (70 aa). Residues Cys1025, His1027, Cys1038, Cys1039, Cys1045, Cys1048, His1049, His1055, Cys1067, Cys1070, Cys1080, Cys1085, Cys1094, Cys1097, His1108, Cys1109, Cys1112, Cys1115, His1127, Cys1128, Cys1131, Cys1134, His1142, and Cys1144 each coordinate Zn(2+). The segment at 1089–1152 adopts a CTCHY-type zinc-finger fold; it reads MGKYFCKICK…VCREKCLEDN (64 aa). The segment at 1153–1195 adopts an RING-type; atypical zinc-finger fold; the sequence is CPICHEYIFTSSSPVKALPCGHLMHSTCFQEYTCSHYTCPVCS.

Binds zinc and iron ions.

It is found in the membrane. The protein localises to the nucleus. Its pathway is protein modification; protein ubiquitination. In terms of biological role, probable E3 ubiquitin-protein ligase that may regulate the response to iron deficiency and thus contributes to iron homeostasis. This is Zinc finger protein BRUTUS-like At1g74770 from Arabidopsis thaliana (Mouse-ear cress).